A 258-amino-acid polypeptide reads, in one-letter code: Imidazole glycerol phosphate synthase subunit HisF (258 aa).

Residues Asp-11 and Asp-130 contribute to the active site.

Belongs to the HisA/HisF family. Heterodimer of HisH and HisF.

Its subcellular location is the cytoplasm. It catalyses the reaction 5-[(5-phospho-1-deoxy-D-ribulos-1-ylimino)methylamino]-1-(5-phospho-beta-D-ribosyl)imidazole-4-carboxamide + L-glutamine = D-erythro-1-(imidazol-4-yl)glycerol 3-phosphate + 5-amino-1-(5-phospho-beta-D-ribosyl)imidazole-4-carboxamide + L-glutamate + H(+). The protein operates within amino-acid biosynthesis; L-histidine biosynthesis; L-histidine from 5-phospho-alpha-D-ribose 1-diphosphate: step 5/9. In terms of biological role, IGPS catalyzes the conversion of PRFAR and glutamine to IGP, AICAR and glutamate. The HisF subunit catalyzes the cyclization activity that produces IGP and AICAR from PRFAR using the ammonia provided by the HisH subunit. This is Imidazole glycerol phosphate synthase subunit HisF from Pectobacterium carotovorum subsp. carotovorum (strain PC1).